Consider the following 406-residue polypeptide: Bifunctional enzyme IspD/IspF (406 aa).

The interval 1–246 is 2-C-methyl-D-erythritol 4-phosphate cytidylyltransferase; the sequence is MLQMPSKQPI…KLSASLLPDV (246 aa). Residues 247-406 form a 2-C-methyl-D-erythritol 2,4-cyclodiphosphate synthase region; the sequence is RTGNGYDVHQ…ATVVYRGVKR (160 aa). Positions 253 and 255 each coordinate a divalent metal cation. Residues 253-255 and 279-280 each bind 4-CDP-2-C-methyl-D-erythritol 2-phosphate; these read DVH and HS. A divalent metal cation is bound at residue histidine 287. Residues 301–303, 377–380, phenylalanine 384, and arginine 387 contribute to the 4-CDP-2-C-methyl-D-erythritol 2-phosphate site; these read DIG and TTNE.

The protein in the N-terminal section; belongs to the IspD/TarI cytidylyltransferase family. IspD subfamily. In the C-terminal section; belongs to the IspF family. A divalent metal cation is required as a cofactor.

It carries out the reaction 2-C-methyl-D-erythritol 4-phosphate + CTP + H(+) = 4-CDP-2-C-methyl-D-erythritol + diphosphate. It catalyses the reaction 4-CDP-2-C-methyl-D-erythritol 2-phosphate = 2-C-methyl-D-erythritol 2,4-cyclic diphosphate + CMP. It participates in isoprenoid biosynthesis; isopentenyl diphosphate biosynthesis via DXP pathway; isopentenyl diphosphate from 1-deoxy-D-xylulose 5-phosphate: step 2/6. The protein operates within isoprenoid biosynthesis; isopentenyl diphosphate biosynthesis via DXP pathway; isopentenyl diphosphate from 1-deoxy-D-xylulose 5-phosphate: step 4/6. Bifunctional enzyme that catalyzes the formation of 4-diphosphocytidyl-2-C-methyl-D-erythritol from CTP and 2-C-methyl-D-erythritol 4-phosphate (MEP) (IspD), and catalyzes the conversion of 4-diphosphocytidyl-2-C-methyl-D-erythritol 2-phosphate (CDP-ME2P) to 2-C-methyl-D-erythritol 2,4-cyclodiphosphate (ME-CPP) with a corresponding release of cytidine 5-monophosphate (CMP) (IspF). This is Bifunctional enzyme IspD/IspF from Rhizobium leguminosarum bv. trifolii (strain WSM2304).